Reading from the N-terminus, the 368-residue chain is Peptide chain release factor 2 (368 aa).

Gln-251 is modified (N5-methylglutamine).

It belongs to the prokaryotic/mitochondrial release factor family. Post-translationally, methylated by PrmC. Methylation increases the termination efficiency of RF2.

It is found in the cytoplasm. Peptide chain release factor 2 directs the termination of translation in response to the peptide chain termination codons UGA and UAA. The polypeptide is Peptide chain release factor 2 (Streptomyces avermitilis (strain ATCC 31267 / DSM 46492 / JCM 5070 / NBRC 14893 / NCIMB 12804 / NRRL 8165 / MA-4680)).